We begin with the raw amino-acid sequence, 625 residues long: 1-deoxy-D-xylulose-5-phosphate synthase (625 aa).

Thiamine diphosphate contacts are provided by residues H80 and 121 to 123 (GHS). D152 contacts Mg(2+). Residues 153–154 (GA), N181, Y290, and E371 each bind thiamine diphosphate. Residue N181 participates in Mg(2+) binding.

This sequence belongs to the transketolase family. DXPS subfamily. Homodimer. It depends on Mg(2+) as a cofactor. Requires thiamine diphosphate as cofactor.

It catalyses the reaction D-glyceraldehyde 3-phosphate + pyruvate + H(+) = 1-deoxy-D-xylulose 5-phosphate + CO2. It functions in the pathway metabolic intermediate biosynthesis; 1-deoxy-D-xylulose 5-phosphate biosynthesis; 1-deoxy-D-xylulose 5-phosphate from D-glyceraldehyde 3-phosphate and pyruvate: step 1/1. Catalyzes the acyloin condensation reaction between C atoms 2 and 3 of pyruvate and glyceraldehyde 3-phosphate to yield 1-deoxy-D-xylulose-5-phosphate (DXP). In Haemophilus influenzae (strain 86-028NP), this protein is 1-deoxy-D-xylulose-5-phosphate synthase.